A 1465-amino-acid chain; its full sequence is DNA polymerase III PolC-type (1465 aa).

Residues 427–583 (YVVFDVETTG…YDAEATGRLL (157 aa)) enclose the Exonuclease domain.

The protein belongs to the DNA polymerase type-C family. PolC subfamily.

The protein resides in the cytoplasm. The catalysed reaction is DNA(n) + a 2'-deoxyribonucleoside 5'-triphosphate = DNA(n+1) + diphosphate. Functionally, required for replicative DNA synthesis. This DNA polymerase also exhibits 3' to 5' exonuclease activity. The polypeptide is DNA polymerase III PolC-type (Streptococcus pyogenes serotype M2 (strain MGAS10270)).